A 216-amino-acid polypeptide reads, in one-letter code: Uracil phosphoribosyltransferase (216 aa).

Residues Arg81, Arg106, and 135–143 each bind 5-phospho-alpha-D-ribose 1-diphosphate; that span reads DPMLATGSS. Uracil contacts are provided by residues Ile200 and 205–207; that span reads GDA. 5-phospho-alpha-D-ribose 1-diphosphate is bound at residue Asp206.

This sequence belongs to the UPRTase family. Requires Mg(2+) as cofactor.

It catalyses the reaction UMP + diphosphate = 5-phospho-alpha-D-ribose 1-diphosphate + uracil. Its pathway is pyrimidine metabolism; UMP biosynthesis via salvage pathway; UMP from uracil: step 1/1. With respect to regulation, allosterically activated by GTP. Its function is as follows. Catalyzes the conversion of uracil and 5-phospho-alpha-D-ribose 1-diphosphate (PRPP) to UMP and diphosphate. The polypeptide is Uracil phosphoribosyltransferase (upp) (Porphyromonas gingivalis (strain ATCC 33277 / DSM 20709 / CIP 103683 / JCM 12257 / NCTC 11834 / 2561)).